The sequence spans 333 residues: Electron transfer flavoprotein subunit alpha, mitochondrial (333 aa).

Residues 1 to 19 (MFRAAAPGQLRRAASLLRF) constitute a mitochondrion transit peptide. Residues 20 to 204 (QSTLVIAEHA…EISEWLDQKL (185 aa)) form a domain I region. N6-acetyllysine; alternate is present on Lys-59. N6-succinyllysine; alternate is present on Lys-59. Lys-62 bears the N6-acetyllysine mark. Lys-69 carries the N6-acetyllysine; alternate modification. Lys-69 bears the N6-succinyllysine; alternate mark. N6-acetyllysine is present on Lys-75. A Phosphothreonine modification is found at Thr-93. N6-acetyllysine occurs at positions 101 and 139. Ser-140 is subject to Phosphoserine. Lys-158 carries the post-translational modification N6-acetyllysine; alternate. An N6-succinyllysine; alternate modification is found at Lys-158. An N6-acetyllysine modification is found at Lys-164. N6-succinyllysine is present on Lys-187. Position 203 is an N6-acetyllysine; alternate (Lys-203). Position 203 is an N6-succinyllysine; alternate (Lys-203). The segment at 205–333 (TKSDRPELTG…PEMTEILKKK (129 aa)) is domain II. Residue Lys-216 is modified to N6-succinyllysine. Arg-223 is a binding site for FAD. Lys-226 and Lys-232 each carry N6-acetyllysine; alternate. N6-succinyllysine; alternate occurs at positions 226 and 232. Residues Ser-248, 263 to 266 (VGQT), 281 to 286 (SGAIQH), and Asn-300 each bind FAD. The residue at position 301 (Lys-301) is an N6-succinyllysine. 318–319 (DL) provides a ligand contact to FAD.

Belongs to the ETF alpha-subunit/FixB family. As to quaternary structure, heterodimer composed of ETFA and ETFB. Identified in a complex that contains ETFA, ETFB and ETFRF1. Interaction with ETFRF1 promotes dissociation of the bound FAD and loss of electron transfer activity. Interacts with TASOR. The cofactor is FAD.

It is found in the mitochondrion matrix. Heterodimeric electron transfer flavoprotein that accepts electrons from several mitochondrial dehydrogenases, including acyl-CoA dehydrogenases, glutaryl-CoA and sarcosine dehydrogenase. It transfers the electrons to the main mitochondrial respiratory chain via ETF-ubiquinone oxidoreductase (ETF dehydrogenase). Required for normal mitochondrial fatty acid oxidation and normal amino acid metabolism. In Pongo abelii (Sumatran orangutan), this protein is Electron transfer flavoprotein subunit alpha, mitochondrial (ETFA).